Reading from the N-terminus, the 185-residue chain is Acireductone dioxygenase (185 aa).

The disordered stretch occupies residues 1 to 23; that stretch reads MSRLSIHPEGNTNATSPAEPLLE. His102, His104, Glu108, and His146 together coordinate Fe(2+). His102, His104, Glu108, and His146 together coordinate Ni(2+).

Belongs to the acireductone dioxygenase (ARD) family. Monomer. Fe(2+) is required as a cofactor. Ni(2+) serves as cofactor.

The catalysed reaction is 1,2-dihydroxy-5-(methylsulfanyl)pent-1-en-3-one + O2 = 3-(methylsulfanyl)propanoate + CO + formate + 2 H(+). The enzyme catalyses 1,2-dihydroxy-5-(methylsulfanyl)pent-1-en-3-one + O2 = 4-methylsulfanyl-2-oxobutanoate + formate + 2 H(+). The protein operates within amino-acid biosynthesis; L-methionine biosynthesis via salvage pathway; L-methionine from S-methyl-5-thio-alpha-D-ribose 1-phosphate: step 5/6. Catalyzes 2 different reactions between oxygen and the acireductone 1,2-dihydroxy-3-keto-5-methylthiopentene (DHK-MTPene) depending upon the metal bound in the active site. Fe-containing acireductone dioxygenase (Fe-ARD) produces formate and 2-keto-4-methylthiobutyrate (KMTB), the alpha-ketoacid precursor of methionine in the methionine recycle pathway. Ni-containing acireductone dioxygenase (Ni-ARD) produces methylthiopropionate, carbon monoxide and formate, and does not lie on the methionine recycle pathway. This chain is Acireductone dioxygenase, found in Prochlorococcus marinus (strain MIT 9303).